The primary structure comprises 68 residues: Negative regulator of P-body association (68 aa).

Residues 1-68 (MGDQPCASGR…LKSHPPPPEK (68 aa)) are disordered.

In terms of assembly, interacts with mRNA decapping proteins DCP1A, DCP2 and EDC4.

Its subcellular location is the cytoplasm. It is found in the P-body. In terms of biological role, promotes dispersal of P-body components and is likely to play a role in the mRNA decapping process. In Homo sapiens (Human), this protein is Negative regulator of P-body association.